A 66-amino-acid polypeptide reads, in one-letter code: MKLSFLSLAFAVIFVMAIMYAPQVEAKASADADADADAAASADALAKASAGMLDRILGAVKGFMGS.

The N-terminal stretch at 1–26 (MKLSFLSLAFAVIFVMAIMYAPQVEA) is a signal peptide. Positions 27–50 (KASADADADADAAASADALAKASA) are excised as a propeptide.

In terms of tissue distribution, expressed by the venom gland.

Its subcellular location is the secreted. Its function is as follows. In vivo, this neurotoxin paralyzes about 50% of blowflies (L.caesar) one hour after intrathoracic injection, when tested at high doses (54 nmol/g). The chain is U8-myrmicitoxin-Tb1a from Tetramorium bicarinatum (Tramp ant).